The primary structure comprises 102 residues: Small ribosomal subunit protein uS10 (102 aa).

Belongs to the universal ribosomal protein uS10 family. As to quaternary structure, part of the 30S ribosomal subunit.

Its function is as follows. Involved in the binding of tRNA to the ribosomes. The polypeptide is Small ribosomal subunit protein uS10 (Macrococcus caseolyticus (strain JCSC5402) (Macrococcoides caseolyticum)).